Reading from the N-terminus, the 592-residue chain is NADH-ubiquinone oxidoreductase chain 5 (592 aa).

The next 14 membrane-spanning stretches (helical) occupy residues 36-56 (LSMV…IYAI), 68-88 (FYII…SDNY), 89-109 (IMMF…ISFW), 132-152 (LFVI…FETM), 169-189 (MMLL…GWLL), 196-216 (TPVS…FVLV), 229-249 (LLVM…MAVV), 256-276 (VMAL…GSSA), 279-299 (LAMY…MSAG), 322-342 (LPFS…MPGL), 364-386 (YIMY…RVTY), 406-426 (STHM…LGYA), 451-471 (LPAM…LTTV), and 534-554 (ALIN…IVFF).

It belongs to the complex I subunit 5 family.

Its subcellular location is the mitochondrion inner membrane. The enzyme catalyses a ubiquinone + NADH + 5 H(+)(in) = a ubiquinol + NAD(+) + 4 H(+)(out). Core subunit of the mitochondrial membrane respiratory chain NADH dehydrogenase (Complex I) that is believed to belong to the minimal assembly required for catalysis. Complex I functions in the transfer of electrons from NADH to the respiratory chain. The immediate electron acceptor for the enzyme is believed to be ubiquinone. In Debaryomyces hansenii (strain ATCC 36239 / CBS 767 / BCRC 21394 / JCM 1990 / NBRC 0083 / IGC 2968) (Yeast), this protein is NADH-ubiquinone oxidoreductase chain 5 (ND5).